The primary structure comprises 620 residues: Schwann cell myelin protein (620 aa).

The N-terminal stretch at 1-17 (MELLVLTVLLMGTGCIS) is a signal peptide. The Extracellular segment spans residues 18 to 516 (APWAAWMPPK…GGLVWAKVGP (499 aa)). The region spanning 28-106 (MAALSGTCVQ…RDCTLNIARL (79 aa)) is the Ig-like V-type domain. Disulfide bonds link cysteine 35–cysteine 164, cysteine 40–cysteine 99, and cysteine 158–cysteine 216. Position 117 (arginine 117) interacts with N-acetylneuraminate. Ig-like C2-type domains follow at residues 151 to 233 (GSEA…DVGL), 239 to 322 (PQVV…LRVA), 325 to 407 (PRAP…FNIS), and 414 to 495 (VLPA…NRHG). Asparagine 222 carries an N-linked (GlcNAc...) asparagine glycan. The cysteines at positions 260 and 304 are disulfide-linked. N-linked (GlcNAc...) asparagine glycosylation is found at asparagine 314 and asparagine 331. An intrachain disulfide couples cysteine 346 to cysteine 391. A glycan (N-linked (GlcNAc...) asparagine) is linked at asparagine 405. Cystine bridges form between cysteine 420-cysteine 429 and cysteine 431-cysteine 488. Asparagine 449 carries an N-linked (GlcNAc...) asparagine glycan. A helical membrane pass occupies residues 517–536 (VGAVVAFAIVIAVVCYLSQS). The Cytoplasmic segment spans residues 537–620 (RRKKGAGSPE…PPEYAEIRVK (84 aa)). Disordered regions lie at residues 539–562 (KKGAGSPEVTPVQPMAGPGGDPDL) and 583–620 (VKEGSGAPQEVTPTSHPPMKPTRGPLEDPPEYAEIRVK).

The protein belongs to the immunoglobulin superfamily. SIGLEC (sialic acid binding Ig-like lectin) family. In terms of tissue distribution, exclusively expressed by myelinating and nonmyelinating Schwann cells and oligodendrocytes.

The protein localises to the membrane. This chain is Schwann cell myelin protein (SMP), found in Coturnix japonica (Japanese quail).